The sequence spans 93 residues: Chromosomal protein MC1 (93 aa).

Positions 1–43 (SNTRNFVLRDEEGNEHGVFTGKQPRQAALKAANRGDGTKSNPD) are disordered.

Functionally, protects DNA against thermal denaturation and modulates transcription. In Methanosarcina barkeri, this protein is Chromosomal protein MC1.